A 156-amino-acid chain; its full sequence is Small ribosomal subunit protein uS7 (156 aa).

It belongs to the universal ribosomal protein uS7 family. Part of the 30S ribosomal subunit. Contacts proteins S9 and S11.

In terms of biological role, one of the primary rRNA binding proteins, it binds directly to 16S rRNA where it nucleates assembly of the head domain of the 30S subunit. Is located at the subunit interface close to the decoding center, probably blocks exit of the E-site tRNA. The polypeptide is Small ribosomal subunit protein uS7 (Shouchella clausii (strain KSM-K16) (Alkalihalobacillus clausii)).